Consider the following 995-residue polypeptide: Beta-agarase A (995 aa).

Residues 1 to 20 (MKIKFLSAAIAASLALPLSA) form the signal peptide. Residues 936–972 (GTNIGVSHSGPEAPDPGEPVDPPIDPPTPPTGGVTGG) form a disordered region. A compositionally biased stretch (pro residues) spans 948-965 (APDPGEPVDPPIDPPTPP).

The protein belongs to the glycosyl hydrolase 50 family.

The enzyme catalyses Hydrolysis of (1-&gt;4)-beta-D-galactosidic linkages in agarose, giving the tetramer as the predominant product.. Hydrolyzes agarose and also neoagarotetraose to yield neoagarobiose. The chain is Beta-agarase A (agaA) from Vibrio sp. (strain JT0107).